The sequence spans 110 residues: Eukaryotic translation initiation factor eIF1 (110 aa).

T40 bears the Phosphothreonine mark.

It belongs to the SUI1 family.

Functionally, probably involved in translation. This chain is Eukaryotic translation initiation factor eIF1, found in Drosophila melanogaster (Fruit fly).